A 517-amino-acid chain; its full sequence is GMP synthase [glutamine-hydrolyzing] (517 aa).

In terms of domain architecture, Glutamine amidotransferase type-1 spans 9-199 (RILILDFGSQ…VLGICGCERL (191 aa)). Cys-86 serves as the catalytic Nucleophile. Active-site residues include His-173 and Glu-175. The region spanning 200 to 392 (WTSESIIEDA…LGLPYEMLYR (193 aa)) is the GMPS ATP-PPase domain. 227 to 233 (SGGVDSS) lines the ATP pocket.

In terms of assembly, homodimer.

The enzyme catalyses XMP + L-glutamine + ATP + H2O = GMP + L-glutamate + AMP + diphosphate + 2 H(+). Its pathway is purine metabolism; GMP biosynthesis; GMP from XMP (L-Gln route): step 1/1. In terms of biological role, catalyzes the synthesis of GMP from XMP. This Vibrio vulnificus (strain CMCP6) protein is GMP synthase [glutamine-hydrolyzing].